Here is a 1254-residue protein sequence, read N- to C-terminus: Unconventional myosin-VI (1254 aa).

The Myosin N-terminal SH3-like domain maps to 2 to 53 (EDGKPVWAPHPTDGFQVGNIVDIGPDSLTIEPLNQKGKTFLALINQVFPAEE). The Myosin motor domain maps to 57 to 772 (KDVEDNCSLM…KFAEFDQIMK (716 aa)). 151–158 (GESGAGKT) lines the ATP pocket. Ser267 carries the phosphoserine modification. A responsible for slow ATPase activity region spans residues 273 to 317 (YLNRGCTRYFANKETDKQILQNRKSPEYLKAGSLKDPLLDDHGDF). A Phosphothreonine modification is found at Thr406. Ser605 carries the phosphoserine modification. The actin-binding stretch occupies residues 666 to 673 (FIRCIKPN). The required for binding calmodulin stretch occupies residues 783 to 811 (KRVNHWLICSRWKKVQWCSLSVIKLKNKI). Positions 814–843 (RAEACIKMQKTIRMWLCKRRHKPRIDGLVK) constitute an IQ domain. The segment at 836 to 917 (PRIDGLVKVG…AVLLSALQKK (82 aa)) is three-helix bundle. The SAH stretch occupies residues 918 to 985 (KQQEEEAERL…EDDEKRIQAE (68 aa)). Positions 935–956 (EKERKRREEDEQRRRKEEEERR) are disordered. Ser1026 carries the phosphoserine modification. The segment at 1037 to 1245 (RGPAVQATKA…ESRQARPTYA (209 aa)) is interaction with TAX1BP1 and CALCOCO2/NDP52. The interaction with OPTN stretch occupies residues 1085–1087 (RRL). Residues 1096–1117 (KNKKRNTETEQRAPKSVTDYAQ) form a disordered region. The segment at 1117–1245 (QQNPAVQLPA…ESRQARPTYA (129 aa)) is interaction with TOM1.

The protein belongs to the TRAFAC class myosin-kinesin ATPase superfamily. Myosin family. Homodimer; dimerization seems to implicate the unfolding of the three-helix bundle region creating an additional calmodulin binding site, and cargo binding. Component of the DISP/DOCK7-induced septin displacement complex, at least composed of DOCK7, LRCH3 and MYO6. Able to function as a monomer under specific conditions in vitro. Forms a complex with CFTR and DAB2 in the apical membrane of epithelial cells. Binding to calmodulin through a unique insert, not found in other myosins, located in the neck region between the motor domain and the IQ domain appears to contribute to the directionality reversal. This interaction occurs only if the C-terminal lobe of calmodulin is occupied by calcium. Interaction with F-actin/ACTN1 occurs only at the apical brush border domain of the proximal tubule cells. Interacts with DAB2. In vitro, the C-terminal globular tail binds a C-terminal region of DAB2. Interacts with CFTR. Interacts with CABP5. Interacts (via residues 1117-1245) with TOM1 (via residues 392-463). Interacts (via residues 1060-1285) with OPTN. Interacts (via residues 1060-1285) with TAX1BP1 and CALCOCO2/NDP52. Interacts with TOM1L2. Interacts with CLIC5; may work together in a complex which also includes RDX and MYO6 to stabilize linkages between the plasma membrane and subjacent actin cytoskeleton at the base of stereocilia. Post-translationally, phosphorylation in the motor domain, induced by EGF, results in translocation of MYO6 from the cell surface to membrane ruffles and affects F-actin dynamics. Phosphorylated in vitro by p21-activated kinase (PAK). As to expression, expressed in all tissues examined including kidney cortex, intestinal mucosa, liver, lung, heart, jowl muscle, brain cortex and medulla, and in the epithelial cell line, LLC-PK1 (at protein level). In the kidney, located to the brush border of adult kidney proximal tubule cells.

Its subcellular location is the golgi apparatus. The protein localises to the trans-Golgi network membrane. It is found in the nucleus. It localises to the cytoplasm. The protein resides in the perinuclear region. Its subcellular location is the membrane. The protein localises to the clathrin-coated pit. It is found in the cytoplasmic vesicle. It localises to the clathrin-coated vesicle. The protein resides in the cell projection. Its subcellular location is the filopodium. The protein localises to the ruffle membrane. It is found in the microvillus. It localises to the cytosol. In terms of biological role, myosins are actin-based motor molecules with ATPase activity. Unconventional myosins serve in intracellular movements. Myosin 6 is a reverse-direction motor protein that moves towards the minus-end of actin filaments. Has slow rate of actin-activated ADP release due to weak ATP binding. Functions in a variety of intracellular processes such as vesicular membrane trafficking and cell migration. Required for the structural integrity of the Golgi apparatus via the p53-dependent pro-survival pathway. Appears to be involved in a very early step of clathrin-mediated endocytosis in polarized epithelial cells. Together with TOM1, mediates delivery of endocytic cargo to autophagosomes thereby promoting autophagosome maturation and driving fusion with lysosomes. Links TOM1 with autophagy receptors, such as TAX1BP1; CALCOCO2/NDP52 and OPTN. May act as a regulator of F-actin dynamics. As part of the DISP complex, may regulate the association of septins with actin and thereby regulate the actin cytoskeleton. May play a role in transporting DAB2 from the plasma membrane to specific cellular targets. May play a role in the extension and network organization of neurites. Required for structural integrity of inner ear hair cells. Required for the correct localization of CLIC5 and RDX at the stereocilium base. Modulates RNA polymerase II-dependent transcription. The chain is Unconventional myosin-VI (MYO6) from Sus scrofa (Pig).